Reading from the N-terminus, the 122-residue chain is Small ribosomal subunit protein uS13 (122 aa).

The tract at residues 98 to 122 (VRGQKTKSNARTRKGPRPSRIKKKK) is disordered. The segment covering 101-122 (QKTKSNARTRKGPRPSRIKKKK) has biased composition (basic residues).

This sequence belongs to the universal ribosomal protein uS13 family. Part of the 30S ribosomal subunit. Forms a loose heterodimer with protein S19. Forms two bridges to the 50S subunit in the 70S ribosome.

Functionally, located at the top of the head of the 30S subunit, it contacts several helices of the 16S rRNA. In the 70S ribosome it contacts the 23S rRNA (bridge B1a) and protein L5 of the 50S subunit (bridge B1b), connecting the 2 subunits; these bridges are implicated in subunit movement. Contacts the tRNAs in the A and P-sites. This is Small ribosomal subunit protein uS13 from Thermosipho africanus (strain TCF52B).